We begin with the raw amino-acid sequence, 926 residues long: Taz1-interacting factor 1 (926 aa).

2 coiled-coil regions span residues 461–496 (REAV…SHQN) and 548–671 (SFTD…LKQK). A Phosphoserine modification is found at serine 548. At threonine 550 the chain carries Phosphothreonine. Serine 552 carries the phosphoserine modification.

It belongs to the ATG11 family. As to quaternary structure, homodimer and potential homooligomers. Interacts with taz1.

The protein localises to the preautophagosomal structure membrane. The protein resides in the vacuole membrane. Involved in cytoplasm to vacuole transport (Cvt), pexophagy, mitophagy and nucleophagy. Recruits mitochondria for their selective degradation via autophagy (mitophagy) during starvation. Works as scaffold proteins that recruit ATG proteins to the preautophagosome (PAS), the site of vesicle/autophagosome formation. Required for atg9 anterograde transport from the mitochondria to the PAS. Required for nitrogen starvation-induced sexual development and for entering the dormant G0 state. In Schizosaccharomyces pombe (strain 972 / ATCC 24843) (Fission yeast), this protein is Taz1-interacting factor 1 (taf1).